We begin with the raw amino-acid sequence, 867 residues long: DNA endonuclease RBBP8 (867 aa).

The interval 25-48 is essential for binding to the MRN complex and for RPA focus formation on DNA damage; that stretch reads ELWSKLKECHDKELQELLLKINKL. Coiled coils occupy residues 38 to 87 and 120 to 141; these read LQEL…EDRL and ITEL…SEQL. Disordered regions lie at residues 141 to 171 and 448 to 486; these read LHNM…PDSP and RYGK…HSML. The span at 154–166 shows a compositional bias: acidic residues; the sequence is ENPADTGEGEDGV. The short motif at 489 to 493 is the PXDLS motif element; the sequence is PLDLS. The segment at 508–531 is damage-recruitment motif; sequence SSRGRTKQTFALVPEKPDPKKPLH. Phosphothreonine is present on residues T817 and T829. The disordered stretch occupies residues 843-867; sequence SPCQRPRRRQPYNAKFSSKIKEQKT.

The protein belongs to the COM1/SAE2/CtIP family. Homotetramer; formed by antiparallel association of helical extensions protruding from the N-termini of two parallel coiled-coil dimers. Interacts with the MRN complex; the interaction links DNA sensing to resection. Interacts with samhd1. Post-translationally, phosphorylation at Thr-817 and Thr-829 promote interaction with nbn and recruitment to double-strand breaks (DSBs).

It localises to the nucleus. Its subcellular location is the chromosome. Its function is as follows. Endonuclease that cooperates with the MRE11-RAD50-NBN (MRN) complex in DNA-end resection, the first step of double-strand break (DSB) repair through the homologous recombination (HR) pathway. Functions downstream of the MRN complex and ATM, promotes ATR activation and its recruitment to DSBs in the S/G2 phase facilitating the generation of ssDNA. Specifically promotes the endonuclease activity of the MRN complex to clear DNA ends containing protein adducts: recruited to DSBs by nbn following phosphorylation, and promotes the endonuclease of mre11 to clear protein-DNA adducts and generate clean double-strand break ends. This chain is DNA endonuclease RBBP8 (rbbp8), found in Xenopus tropicalis (Western clawed frog).